We begin with the raw amino-acid sequence, 63 residues long: Progonadoliberin-1 (63 aa).

Gln1 is modified (pyrrolidone carboxylic acid). Residue Gly10 is modified to Glycine amide.

Belongs to the GnRH family. Post-translationally, the precursor is cleaved by ACE, which removes the Gly-Lys-Arg peptide at the C-terminus, leading to mature hormone. The mature form of Gonadoliberin-1 is also cleaved and degraded by ACE.

It is found in the secreted. In terms of biological role, stimulates the secretion of gonadotropins; it stimulates the secretion of both luteinizing and follicle-stimulating hormones. The sequence is that of Progonadoliberin-1 (GNRH1) from Mesocricetus auratus (Golden hamster).